The chain runs to 526 residues: 3-hydroxy-3-methylglutaryl-coenzyme A reductase 2 (526 aa).

Active-site charge relay system residues include glutamate 193, lysine 325, and aspartate 401. Histidine 499 acts as the Proton donor in catalysis. Residues 503–526 (NRKTEAPAPQADTISMTHNLPHSD) form a disordered region. Over residues 514-526 (DTISMTHNLPHSD) the composition is skewed to polar residues.

This sequence belongs to the HMG-CoA reductase family.

The catalysed reaction is (R)-mevalonate + 2 NADP(+) + CoA = (3S)-3-hydroxy-3-methylglutaryl-CoA + 2 NADPH + 2 H(+). It functions in the pathway metabolic intermediate biosynthesis; (R)-mevalonate biosynthesis; (R)-mevalonate from acetyl-CoA: step 3/3. In terms of biological role, this transmembrane glycoprotein is involved in the control of cholesterol biosynthesis. It is the rate-limiting enzyme of the sterol biosynthesis. The polypeptide is 3-hydroxy-3-methylglutaryl-coenzyme A reductase 2 (hmgB) (Dictyostelium discoideum (Social amoeba)).